We begin with the raw amino-acid sequence, 185 residues long: Ribosome-recycling factor (185 aa).

The tract at residues 140 to 166 (KRQEKDGDITEDEQRSLEKQVQKVTDD) is disordered.

This sequence belongs to the RRF family.

Its subcellular location is the cytoplasm. In terms of biological role, responsible for the release of ribosomes from messenger RNA at the termination of protein biosynthesis. May increase the efficiency of translation by recycling ribosomes from one round of translation to another. This is Ribosome-recycling factor from Lactobacillus johnsonii (strain CNCM I-12250 / La1 / NCC 533).